The sequence spans 221 residues: Putative adhesin P1-like protein MPN_131 (221 aa).

Over residues 13–36 (RYGNNHRGSNSSTSGVTTQGQSQN) the composition is skewed to low complexity. Disordered regions lie at residues 13 to 51 (RYGN…NVGV) and 90 to 183 (GWRN…TPSG). The span at 37–48 (ASSNEPAPTFSN) shows a compositional bias: polar residues. The span at 130-139 (LKQDKADKSG) shows a compositional bias: basic and acidic residues. Composition is skewed to polar residues over residues 149 to 160 (SGDNLTNYTNLP) and 174 to 183 (HSPTRTTPSG).

The protein belongs to the adhesin P1 family.

This is Putative adhesin P1-like protein MPN_131 from Mycoplasma pneumoniae (strain ATCC 29342 / M129 / Subtype 1) (Mycoplasmoides pneumoniae).